Here is a 423-residue protein sequence, read N- to C-terminus: UPF0229 protein PSEEN0423 (423 aa).

Residues 85 to 107 are disordered; sequence GEHIARPQGGGGGGGRGKAGNSG. Residues 92-107 are compositionally biased toward gly residues; sequence QGGGGGGGRGKAGNSG.

Belongs to the UPF0229 family.

The polypeptide is UPF0229 protein PSEEN0423 (Pseudomonas entomophila (strain L48)).